Consider the following 533-residue polypeptide: Calcium-dependent protein kinase 12 (533 aa).

Residues 1–77 (MGNCFTKTYE…RASGGGGEMG (77 aa)) form a disordered region. Gly-2 carries the N-myristoyl glycine lipid modification. Residues 26 to 38 (ERSKARGGDEPGT) show a composition bias toward basic and acidic residues. Residues 57–69 (GSSSAAGALSRRA) show a composition bias toward low complexity. The region spanning 91–349 (YQLDRKLGSG…ASQALEHRWL (259 aa)) is the Protein kinase domain. Residues 97–105 (LGSGQFGTT) and Lys-120 contribute to the ATP site. Asp-215 functions as the Proton acceptor in the catalytic mechanism. Residues 354–384 (ASDRPIDSAVLSRMKQFKAMNKLKQLALKVI) form an autoinhibitory domain region. EF-hand domains are found at residues 391-426 (EEIKGLKQMFNNMDTDRSGTITVEELKVGLTKLGSR), 427-462 (ISEAEVQKLMEAVDVDKSGSIDYSEFLTAMINKHKL), 463-498 (EKEEDLLRAFQHFDKDNSGYITRDELEQAMAEYGMG), and 499-533 (DEANIKQVLDEVDKDKDGRIDYEEFVEMMRKGIQT). The Ca(2+) site is built by Asp-404, Asp-406, Ser-408, Thr-410, Glu-415, Asp-440, Asp-442, Ser-444, Ser-446, Glu-451, Asp-476, Asp-478, Ser-480, Tyr-482, Glu-487, Asp-511, Asp-513, Asp-515, Arg-517, and Glu-522.

This sequence belongs to the protein kinase superfamily. Ser/Thr protein kinase family. CDPK subfamily. Expressed in roots, leaf blades and developing seeds. Expressed in vascular tissues of roots and leaf blades. Expressed in the phloem tissue of the large vascular bundle in leaf blades.

It is found in the membrane. It carries out the reaction L-seryl-[protein] + ATP = O-phospho-L-seryl-[protein] + ADP + H(+). The enzyme catalyses L-threonyl-[protein] + ATP = O-phospho-L-threonyl-[protein] + ADP + H(+). Its activity is regulated as follows. Activated by calcium. Autophosphorylation may play an important role in the regulation of the kinase activity. Its function is as follows. May play a role in signal transduction pathways that involve calcium as a second messenger. Functions in signal transduction pathways that positively regulate responses to low-nitrogen. Functions in multiple signaling pathways, positively regulating salt tolerance and negatively modulating rice blast fungus resistance. May promote tolerance to salt stress by negatively regulating NADPH oxidase and positively regulating reactive oxygen species (ROS) scavengers. This chain is Calcium-dependent protein kinase 12, found in Oryza sativa subsp. japonica (Rice).